Consider the following 213-residue polypeptide: Nicolin-1 (213 aa).

In terms of assembly, part of the neuronal tubulin polyglutamylase complex which contains TPGS1, TPGS2, TTLL1, LRRC49 and NICN1.

Its subcellular location is the nucleus. The protein is Nicolin-1 (NICN1) of Canis lupus familiaris (Dog).